The chain runs to 129 residues: Small ribosomal subunit protein uS8 (129 aa).

The protein belongs to the universal ribosomal protein uS8 family. Part of the 30S ribosomal subunit.

One of the primary rRNA binding proteins, it binds directly to 16S rRNA central domain where it helps coordinate assembly of the platform of the 30S subunit. The polypeptide is Small ribosomal subunit protein uS8 (Picrophilus torridus (strain ATCC 700027 / DSM 9790 / JCM 10055 / NBRC 100828 / KAW 2/3)).